We begin with the raw amino-acid sequence, 259 residues long: Type III pantothenate kinase (259 aa).

6-13 (DIGNTNIT) provides a ligand contact to ATP. Residue 113–116 (GADR) coordinates substrate. Asp-115 (proton acceptor) is an active-site residue. Asp-135 contacts K(+). ATP is bound at residue Thr-138. Thr-190 lines the substrate pocket.

The protein belongs to the type III pantothenate kinase family. As to quaternary structure, homodimer. The cofactor is NH4(+). K(+) is required as a cofactor.

The protein resides in the cytoplasm. The catalysed reaction is (R)-pantothenate + ATP = (R)-4'-phosphopantothenate + ADP + H(+). The protein operates within cofactor biosynthesis; coenzyme A biosynthesis; CoA from (R)-pantothenate: step 1/5. Its function is as follows. Catalyzes the phosphorylation of pantothenate (Pan), the first step in CoA biosynthesis. This is Type III pantothenate kinase from Endomicrobium trichonymphae.